Consider the following 1165-residue polypeptide: Sperm-associated antigen 5 (1165 aa).

The interval 1–23 (MWRVKTLNLGLSPSPQKGKPAMS) is disordered. A phosphoserine mark is found at S12, S14, S66, S161, S321, S333, and S342. The disordered stretch occupies residues 431-457 (TVPHREARDSSTQTDSSPCGVTKTPKH). The span at 440 to 449 (SSTQTDSSPC) shows a compositional bias: polar residues. An interaction with KNSTRN region spans residues 453–821 (KTPKHLQDSK…LRDTVDSLRA (369 aa)). Positions 509 to 856 (RSKTLVSSCS…LLAEQLQSLT (348 aa)) form a coiled coil. A disordered region spans residues 875 to 907 (PSTGSAPAQEHPLSNDSSISEQTPTAAVDEVPE). Residues 876-897 (STGSAPAQEHPLSNDSSISEQT) are compositionally biased toward polar residues. Positions 937 to 1146 (DLEKSLAEMS…IQHVYETLLS (210 aa)) form a coiled coil. S946 carries the post-translational modification Phosphoserine; by GSK3-beta.

As to quaternary structure, homodimer, with a globular head domain and a long stalk. Homooligomer; the globular head domains associate, resulting in aster-like structures. Binds to microtubules in the mitotic spindle. Interacts with DCLRE1B/Apollo. Part of an astrin (SPAG5)-kinastrin (SKAP) complex containing KNSTRN, SPAG5, PLK1, DYNLL1 and SGO2A. Interacts with KNSTRN. Interacts with RPTOR; this interaction competes with RPTOR binding to MTOR, resulting in decreased mTORC1 formation. Interacts with G3BP1. The complex formed with G3BP1 and RPTOR is increased by oxidative stress. Interacts with OSBPL8, PCM1 and CDK5RAP2. Interacts (via C-terminus) with NUMA1 (via C-terminus); this interaction promotes the recruitment of SPAG5 to the microtubules at spindle poles in a dynein-dynactin-dependent manner. Interacts with DYNLL1. Post-translationally, phosphorylated by AURKA. As to expression, detected in testis, but not in the other tissues tested.

The protein localises to the cytoplasm. It is found in the cytoskeleton. It localises to the spindle. The protein resides in the spindle pole. Its subcellular location is the chromosome. The protein localises to the centromere. It is found in the kinetochore. It localises to the midbody. The protein resides in the microtubule organizing center. Its subcellular location is the centrosome. The protein localises to the centriolar satellite. In terms of biological role, essential component of the mitotic spindle required for normal chromosome segregation and progression into anaphase. Required for chromosome alignment, normal timing of sister chromatid segregation, and maintenance of spindle pole architecture. In complex with SKAP, promotes stable microtubule-kinetochore attachments. May contribute to the regulation of separase activity. May regulate AURKA localization to mitotic spindle, but not to centrosomes and CCNB1 localization to both mitotic spindle and centrosomes. Involved in centriole duplication. Required for CDK5RAP22, CEP152, WDR62 and CEP63 centrosomal localization and promotes the centrosomal localization of CDK2. In non-mitotic cells, upon stress induction, inhibits mammalian target of rapamycin complex 1 (mTORC1) association and recruits the mTORC1 component RPTOR to stress granules (SGs), thereby preventing mTORC1 hyperactivation-induced apoptosis. May enhance GSK3B-mediated phosphorylation of other substrates, such as MAPT/TAU. This chain is Sperm-associated antigen 5 (Spag5), found in Mus musculus (Mouse).